The following is a 70-amino-acid chain: Large ribosomal subunit protein uL29 (70 aa).

The protein belongs to the universal ribosomal protein uL29 family.

In Thermosynechococcus vestitus (strain NIES-2133 / IAM M-273 / BP-1), this protein is Large ribosomal subunit protein uL29.